The primary structure comprises 302 residues: Ventral anterior homeobox 2a (302 aa).

Disordered regions lie at residues 1 to 35 (MFDQATSMGDGVSEERSPLCGKSATSCSERVRDKG), 50 to 73 (KDIPVTSTSSPGSSKEEVQDSQST), 156 to 175 (RRTKQKKDQSRDSEKRSSST), 199 to 223 (PPNLISSSQNNMGTSSGNGTNLGTS), and 282 to 302 (AFEPYTRLDRKDTASSKKSTS). Residues 105-164 (PKRTRTSFTAEQLYRLELEFQRCQYVVGRERTELARQLNLSETQVKVWFQNRRTKQKKDQ) constitute a DNA-binding region (homeobox). Basic and acidic residues predominate over residues 161–172 (KKDQSRDSEKRS). Over residues 204 to 223 (SSSQNNMGTSSGNGTNLGTS) the composition is skewed to low complexity. Residues 287–296 (TRLDRKDTAS) are compositionally biased toward basic and acidic residues.

The protein belongs to the EMX homeobox family.

The protein resides in the nucleus. In terms of biological role, transcription factor that may function in dorsoventral specification of the forebrain. Regulates the expression of Wnt signaling antagonists including the expression of a truncated tcf7l2 isoform that cannot bind ctnnb1 and acts therefore as a potent dominant-negative Wnt antagonist. Plays a crucial role in eye development and, in particular, in the specification of the ventral optic vesicle. May be a regulator of axial polarization in the retina. The sequence is that of Ventral anterior homeobox 2a (vax2-a) from Xenopus laevis (African clawed frog).